Consider the following 231-residue polypeptide: 7-cyano-7-deazaguanine synthase (231 aa).

Residue 8-18 participates in ATP binding; that stretch reads FSGGQDSTTCL. 4 residues coordinate Zn(2+): cysteine 187, cysteine 196, cysteine 199, and cysteine 202.

It belongs to the QueC family. It depends on Zn(2+) as a cofactor.

It carries out the reaction 7-carboxy-7-deazaguanine + NH4(+) + ATP = 7-cyano-7-deazaguanine + ADP + phosphate + H2O + H(+). It functions in the pathway purine metabolism; 7-cyano-7-deazaguanine biosynthesis. Functionally, catalyzes the ATP-dependent conversion of 7-carboxy-7-deazaguanine (CDG) to 7-cyano-7-deazaguanine (preQ(0)). The chain is 7-cyano-7-deazaguanine synthase from Vibrio vulnificus (strain CMCP6).